The following is a 550-amino-acid chain: Ribosomal protein S6 kinase beta (550 aa).

The Protein kinase domain occupies 83-344; it reads FQLLKVLGKG…AEEIKSHAFF (262 aa). ATP is bound by residues 89 to 97 and Lys115; that span reads LGKGGYGKV. The active-site Proton acceptor is Asp210. Residues 345 to 415 enclose the AGC-kinase C-terminal domain; it reads KTTDWNLVYA…VAPSVLEMMN (71 aa). Residue Thr404 is modified to Phosphothreonine. Disordered regions lie at residues 433–466 and 484–550; these read RAGAAKSPRKPGDPETASILHGGHSNLFGHGPNS and TAGG…KRVM. Ser439 carries the phosphoserine modification. Low complexity predominate over residues 520-534; the sequence is TTTGNGSTTTTRPSN.

It belongs to the protein kinase superfamily. AGC Ser/Thr protein kinase family. S6 kinase subfamily. It depends on Mg(2+) as a cofactor. May be phosphorylated on Thr-404 by let-363/TOR.

It is found in the cell projection. The protein resides in the axon. Its subcellular location is the perikaryon. The enzyme catalyses L-seryl-[protein] + ATP = O-phospho-L-seryl-[protein] + ADP + H(+). The catalysed reaction is L-threonyl-[protein] + ATP = O-phospho-L-threonyl-[protein] + ADP + H(+). Serine/threonine-protein kinase which regulates mRNA translation. Negatively regulates lifespan and resistance to starvation, oxidative stress, protein aggregation and P.aeruginosa-mediated infection. May regulate these processes by preventing the activation of transcription factor hif-1. Required, probably downstream of let-363/TOR, for the establishment of the proper number of germline progenitors by promoting cell cycle progression and preventing differentiation during larval development. Regulates germ cell size. In addition required for sperm production and embryo viability. Involved in axon regeneration of PLM and ALM neurons by inhibiting growth cone formation early after axotomy and later by inhibiting axon extension. Functions in axon regeneration and lifespan probably by preventing aak-2/AMPK activation. Negatively regulates autophagy. This Caenorhabditis elegans protein is Ribosomal protein S6 kinase beta.